A 337-amino-acid chain; its full sequence is Heme A synthase (337 aa).

5 helical membrane passes run 6–26 (ITKW…IGGI), 87–107 (FIHR…LIYF), 119–139 (LPYI…WYMV), 154–174 (LAFH…QLIK), and 192–212 (LIFS…GALV). H256 serves as a coordination point for heme. 3 helical membrane passes run 258–278 (LGGY…LKIE), 285–305 (IAYF…ITLL), and 308–328 (VPII…SIII). A heme-binding site is contributed by H316.

The protein belongs to the COX15/CtaA family. Type 2 subfamily. In terms of assembly, interacts with CtaB. Requires heme b as cofactor.

Its subcellular location is the cell membrane. It carries out the reaction Fe(II)-heme o + 2 A + H2O = Fe(II)-heme a + 2 AH2. Its pathway is porphyrin-containing compound metabolism; heme A biosynthesis; heme A from heme O: step 1/1. Functionally, catalyzes the conversion of heme O to heme A by two successive hydroxylations of the methyl group at C8. The first hydroxylation forms heme I, the second hydroxylation results in an unstable dihydroxymethyl group, which spontaneously dehydrates, resulting in the formyl group of heme A. The polypeptide is Heme A synthase (Rickettsia massiliae (strain Mtu5)).